The chain runs to 340 residues: Methionine import ATP-binding protein MetN 2 (340 aa).

Residues 2–241 (ITLQNVVKEY…PQEKVTQRFV (240 aa)) form the ABC transporter domain. 38–45 (GYSGAGKS) contacts ATP.

It belongs to the ABC transporter superfamily. Methionine importer (TC 3.A.1.24) family. The complex is composed of two ATP-binding proteins (MetN), two transmembrane proteins (MetI) and a solute-binding protein (MetQ).

Its subcellular location is the cell membrane. It catalyses the reaction L-methionine(out) + ATP + H2O = L-methionine(in) + ADP + phosphate + H(+). It carries out the reaction D-methionine(out) + ATP + H2O = D-methionine(in) + ADP + phosphate + H(+). Part of the ABC transporter complex MetNIQ involved in methionine import. Responsible for energy coupling to the transport system. This chain is Methionine import ATP-binding protein MetN 2, found in Listeria monocytogenes serovar 1/2a (strain ATCC BAA-679 / EGD-e).